We begin with the raw amino-acid sequence, 464 residues long: 3-isopropylmalate dehydratase large subunit (464 aa).

Residues Cys337, Cys397, and Cys400 each contribute to the [4Fe-4S] cluster site.

The protein belongs to the aconitase/IPM isomerase family. LeuC type 1 subfamily. Heterodimer of LeuC and LeuD. The cofactor is [4Fe-4S] cluster.

The catalysed reaction is (2R,3S)-3-isopropylmalate = (2S)-2-isopropylmalate. The protein operates within amino-acid biosynthesis; L-leucine biosynthesis; L-leucine from 3-methyl-2-oxobutanoate: step 2/4. Catalyzes the isomerization between 2-isopropylmalate and 3-isopropylmalate, via the formation of 2-isopropylmaleate. The protein is 3-isopropylmalate dehydratase large subunit of Bacillus thuringiensis (strain Al Hakam).